Here is a 475-residue protein sequence, read N- to C-terminus: Mitochondrial adenyl nucleotide antiporter SLC25A24 (475 aa).

The regulatory N-terminal domain stretch occupies residues 1 to 173 (MLRWLRGFVL…RFWKHSTGID (173 aa)). Residues 1-197 (MLRWLRGFVL…ERKSGQWWRQ (197 aa)) lie on the Mitochondrial intermembrane side of the membrane. EF-hand domains lie at 19-54 (EPPT…LGIP), 55-88 (LGQD…KDHE), 86-121 (DHEK…LGLT), and 122-157 (ISEQ…NPVA). Ca(2+)-binding residues include Asp-32, Asn-34, Asp-36, Val-38, Glu-43, Asp-68, Asn-70, Asp-72, Lys-74, Glu-79, Asp-99, Asn-101, Asp-103, Lys-105, Glu-110, Asp-135, Asp-137, Thr-139, Thr-141, and Glu-146. The segment at 159 to 168 (IEEIIRFWKH) is linker region. Residues 174-475 (IGDSLTIPDE…MKQTLGVTQK (302 aa)) are C-terminal transmembrane transporter domain. 3 Solcar repeats span residues 192–276 (GQWW…YKKL), 284–369 (IGTF…LKSH), and 381–469 (PGVL…MKQT). A helical transmembrane segment spans residues 198-215 (LLAGGIAGAVSRTSTAPL). The Mitochondrial matrix segment spans residues 216-250 (DRLKVMMQVHGSKSMNIFGGFRQMIKEGGVRSLWR). The chain crosses the membrane as a helical span at residues 251-270 (GNGTNVIKIAPETAVKFWVY). At 271-293 (EQYKKLLTEEGQKIGTFERFISG) the chain is on the mitochondrial intermembrane side. The chain crosses the membrane as a helical span at residues 294–307 (SMAGATAQTFIYPM). Topologically, residues 308-343 (EVMKTRLAVGKTGQYSGIYDCAKKILKYEGFGAFYK) are mitochondrial matrix. At Lys-318 the chain carries N6-acetyllysine; alternate. Lys-318 is subject to N6-succinyllysine; alternate. Lys-334 is subject to N6-acetyllysine. A helical transmembrane segment spans residues 344–363 (GYVPNLLGIIPYAGIDLAVY). Over 364 to 386 (ELLKSHWLDNFAKDSVNPGVLVL) the chain is Mitochondrial intermembrane. The chain crosses the membrane as a helical span at residues 387 to 404 (LGCGALSSTCGQLASYPL). The Mitochondrial matrix segment spans residues 405 to 443 (ALVRTRMQAQAMLEGAPQLNMVGLFRRIISKEGLPGLYR). Lys-435 bears the N6-acetyllysine; alternate mark. Lys-435 carries the N6-succinyllysine; alternate modification. Residues 444–463 (GITPNFMKVLPAVGISYVVY) form a helical membrane-spanning segment. At 464–475 (ENMKQTLGVTQK) the chain is on the mitochondrial intermembrane side.

It belongs to the mitochondrial carrier (TC 2.A.29) family. As to quaternary structure, monomer. In terms of tissue distribution, mainly expressed in colon. Also expressed in the small intestine proximal to the ileum. Weakly expressed in kidney but not in the liver.

The protein resides in the mitochondrion inner membrane. Its subcellular location is the peroxisome membrane. The catalysed reaction is Mg(2+)(out) + phosphate(in) + ATP(out) = Mg(2+)(in) + phosphate(out) + ATP(in). It catalyses the reaction ADP(out) + phosphate(in) + H(+)(out) = ADP(in) + phosphate(out) + H(+)(in). The enzyme catalyses AMP(out) + phosphate(in) = AMP(in) + phosphate(out). It carries out the reaction phosphate(in) + ATP(out) + 2 H(+)(out) = phosphate(out) + ATP(in) + 2 H(+)(in). The catalysed reaction is dADP(in) + ADP(out) = dADP(out) + ADP(in). It catalyses the reaction Mg(2+)(in) + ADP(out) + ATP(in) + H(+)(out) = Mg(2+)(out) + ADP(in) + ATP(out) + H(+)(in). The enzyme catalyses ADP(out) + diphosphate(in) = ADP(in) + diphosphate(out). It carries out the reaction dAMP(in) + ADP(out) + H(+)(out) = dAMP(out) + ADP(in) + H(+)(in). The catalysed reaction is 3'-AMP(in) + ADP(out) + H(+)(out) = 3'-AMP(out) + ADP(in) + H(+)(in). It catalyses the reaction dAMP(out) + phosphate(in) = dAMP(in) + phosphate(out). The enzyme catalyses 3'-AMP(out) + phosphate(in) = 3'-AMP(in) + phosphate(out). It carries out the reaction dADP(out) + phosphate(in) + H(+)(out) = dADP(in) + phosphate(out) + H(+)(in). With respect to regulation, activated by an increase in cytosolic calcium levels that induce a conformational change of the N-terminal regulatory domain, uncapping the channel and allowing transport. Inhibited by bathophenanthroline, mersalyl, p-hydroxymercuribenzoate, bromcresol purple and tannic acid. Functionally, electroneutral antiporter that mediates the transport of adenyl nucleotides through the inner mitochondrial membrane. Originally identified as an ATP-magnesium/inorganic phosphate antiporter, it also acts as a broad specificity adenyl nucleotide antiporter. By regulating the mitochondrial matrix adenyl nucleotide pool could adapt to changing cellular energetic demands and indirectly regulate adenyl nucleotide-dependent metabolic pathways. In vitro, a low activity is also observed with guanyl and pyrimidine nucleotides. May play a role in protecting cells against oxidative stress-induced cell death, by buffering calcium levels in the mitochondrial matrix through the formation of calcium-phosphate precipitates. In Oryctolagus cuniculus (Rabbit), this protein is Mitochondrial adenyl nucleotide antiporter SLC25A24 (SLC25A24).